A 171-amino-acid polypeptide reads, in one-letter code: S-ribosylhomocysteine lyase (171 aa).

H54, H58, and C128 together coordinate Fe cation.

It belongs to the LuxS family. In terms of assembly, homodimer. Fe cation is required as a cofactor.

The enzyme catalyses S-(5-deoxy-D-ribos-5-yl)-L-homocysteine = (S)-4,5-dihydroxypentane-2,3-dione + L-homocysteine. Its function is as follows. Involved in the synthesis of autoinducer 2 (AI-2) which is secreted by bacteria and is used to communicate both the cell density and the metabolic potential of the environment. The regulation of gene expression in response to changes in cell density is called quorum sensing. Catalyzes the transformation of S-ribosylhomocysteine (RHC) to homocysteine (HC) and 4,5-dihydroxy-2,3-pentadione (DPD). The sequence is that of S-ribosylhomocysteine lyase from Shigella flexneri.